We begin with the raw amino-acid sequence, 68 residues long: Cytotoxic linear peptide IsCT (68 aa).

An N-terminal signal peptide occupies residues 1 to 23 (MKTQFAILLVALVLFQMFAQSDA). Position 36 is a phenylalanine amide (phenylalanine 36). Residues 40 to 68 (GLSDLDGLDELFDGEISKADRDFLRELMR) constitute a propeptide that is removed on maturation.

The protein belongs to the non-disulfide-bridged peptide (NDBP) superfamily. Short antimicrobial peptide (group 4) family. IsCTf is an enzymatic proteolytic cleavage product of IsCT by the proteases present in the venom. In terms of tissue distribution, expressed by the venom gland.

It localises to the secreted. It is found in the target cell membrane. Its function is as follows. Shows weak hemolytic activity and antibacterial activity against both Gram-positive and Gram-negative bacteria probably by forming pores in the cell membrane. IsCT adopts an amphipathic alpha-helical structure. Shows neither hemolytic, nor antibacterial activities, probably because it cannot adopt amphipathic alpha-helical structure. In Opisthacanthus madagascariensis (Scorpion), this protein is Cytotoxic linear peptide IsCT.